The primary structure comprises 209 residues: Holliday junction branch migration complex subunit RuvA (209 aa).

A domain I region spans residues 1 to 64 (MIGRIRGMLI…EDAQSLYGFA (64 aa)). The interval 65–143 (SRLDRNLFRL…QLEGQFVPSQ (79 aa)) is domain II. The interval 144–157 (PDVPTGAGAATASQ) is flexible linker. A domain III region spans residues 158 to 209 (AGPDPREEAEAALIALGYKPQEAAKAISKVAGPDMNSETLIRLALKNMIPAG).

It belongs to the RuvA family. As to quaternary structure, homotetramer. Forms an RuvA(8)-RuvB(12)-Holliday junction (HJ) complex. HJ DNA is sandwiched between 2 RuvA tetramers; dsDNA enters through RuvA and exits via RuvB. An RuvB hexamer assembles on each DNA strand where it exits the tetramer. Each RuvB hexamer is contacted by two RuvA subunits (via domain III) on 2 adjacent RuvB subunits; this complex drives branch migration. In the full resolvosome a probable DNA-RuvA(4)-RuvB(12)-RuvC(2) complex forms which resolves the HJ.

The protein localises to the cytoplasm. Its function is as follows. The RuvA-RuvB-RuvC complex processes Holliday junction (HJ) DNA during genetic recombination and DNA repair, while the RuvA-RuvB complex plays an important role in the rescue of blocked DNA replication forks via replication fork reversal (RFR). RuvA specifically binds to HJ cruciform DNA, conferring on it an open structure. The RuvB hexamer acts as an ATP-dependent pump, pulling dsDNA into and through the RuvAB complex. HJ branch migration allows RuvC to scan DNA until it finds its consensus sequence, where it cleaves and resolves the cruciform DNA. This is Holliday junction branch migration complex subunit RuvA from Marinobacter nauticus (strain ATCC 700491 / DSM 11845 / VT8) (Marinobacter aquaeolei).